Consider the following 106-residue polypeptide: Iron-sulfur cluster assembly protein CyaY (106 aa).

It belongs to the frataxin family.

Functionally, involved in iron-sulfur (Fe-S) cluster assembly. May act as a regulator of Fe-S biogenesis. This chain is Iron-sulfur cluster assembly protein CyaY, found in Yersinia pseudotuberculosis serotype O:3 (strain YPIII).